A 25-amino-acid chain; its full sequence is Antimicrobial peptide THP3 (25 aa).

Its subcellular location is the secreted. In terms of biological role, bactericidal activity; inhibits Staphylococcus aureus. The sequence is that of Antimicrobial peptide THP3 from Meleagris gallopavo (Wild turkey).